Here is a 228-residue protein sequence, read N- to C-terminus: Urease accessory protein UreF (228 aa).

This sequence belongs to the UreF family. UreD, UreF and UreG form a complex that acts as a GTP-hydrolysis-dependent molecular chaperone, activating the urease apoprotein by helping to assemble the nickel containing metallocenter of UreC. The UreE protein probably delivers the nickel.

The protein resides in the cytoplasm. In terms of biological role, required for maturation of urease via the functional incorporation of the urease nickel metallocenter. This is Urease accessory protein UreF from Prochlorococcus marinus (strain AS9601).